The sequence spans 701 residues: Elongation factor G (701 aa).

Positions 11 to 287 constitute a tr-type G domain; the sequence is TKVRNIGIMA…AVIDYLPSPL (277 aa). GTP contacts are provided by residues 20–27, 84–88, and 138–141; these read AHIDAGKT, DTPGH, and NKMD.

This sequence belongs to the TRAFAC class translation factor GTPase superfamily. Classic translation factor GTPase family. EF-G/EF-2 subfamily.

The protein localises to the cytoplasm. Catalyzes the GTP-dependent ribosomal translocation step during translation elongation. During this step, the ribosome changes from the pre-translocational (PRE) to the post-translocational (POST) state as the newly formed A-site-bound peptidyl-tRNA and P-site-bound deacylated tRNA move to the P and E sites, respectively. Catalyzes the coordinated movement of the two tRNA molecules, the mRNA and conformational changes in the ribosome. This is Elongation factor G from Mycobacterium ulcerans (strain Agy99).